We begin with the raw amino-acid sequence, 434 residues long: 3-phosphoshikimate 1-carboxyvinyltransferase (434 aa).

Residues K22, S23, and R27 each coordinate 3-phosphoshikimate. Residue K22 coordinates phosphoenolpyruvate. Residues G93 and R121 each contribute to the phosphoenolpyruvate site. Residues S168, S169, Q170, S199, D320, and K347 each contribute to the 3-phosphoshikimate site. Residue Q170 participates in phosphoenolpyruvate binding. D320 acts as the Proton acceptor in catalysis. The phosphoenolpyruvate site is built by R351, R394, and K419.

Belongs to the EPSP synthase family. In terms of assembly, monomer.

It is found in the cytoplasm. The enzyme catalyses 3-phosphoshikimate + phosphoenolpyruvate = 5-O-(1-carboxyvinyl)-3-phosphoshikimate + phosphate. It participates in metabolic intermediate biosynthesis; chorismate biosynthesis; chorismate from D-erythrose 4-phosphate and phosphoenolpyruvate: step 6/7. In terms of biological role, catalyzes the transfer of the enolpyruvyl moiety of phosphoenolpyruvate (PEP) to the 5-hydroxyl of shikimate-3-phosphate (S3P) to produce enolpyruvyl shikimate-3-phosphate and inorganic phosphate. This Burkholderia cenocepacia (strain HI2424) protein is 3-phosphoshikimate 1-carboxyvinyltransferase.